The sequence spans 854 residues: MMAYSDTTMMSDDIDWLRSHRGVCKVDLYNPEGQQDQDRKVICFVDVSTLNVEDKDYKDAASSSSEGNLNLGSLEEKEIIVIKDTEKKDQSKTEGSVCLFKQAPSDPVSVLNWLLSDLQKYALGFQHALSPSTSTCKHKVGDTEGEYHRASSENCYSVYADQVNIDYLMNRPQNLRLEMTAAKNTNNNQSPSAPPAKPPSTQRAVISPDGECSIDDLSFYVNRLSSLVIQMAHKEIKEKLEGKSKCLHHSICPSPGNKERISPRTPASKIASEMAYEAVELTAAEMRGTGEESREGGQKSFLYSELSNKSKSGDKQMSQRESKEFADSISKGLMVYANQVASDMMVSLMKTLKVHSSGKPIPASVVLKRVLLRHTKEIVSDLIDSCMKNLHNITGVLMTDSDFVSAVKRNLFNQWKQNATDIMEAMLKRLVSALIGEEKETKSQSLSYASLKAGSHDPKCRNQSLEFSTMKAEMKERDKGKMKSDPCKSLTSAEKVGEHILKEGLTIWNQKQGNSCKVATKACSNKDEKGEKINASTDSLAKDLIVSALKLIQYHLTQQTKGKDTCEEDCPGSTMGYMAQSTQYEKCGGGQSAKALSVKQLESHRAPGPSTCQKENQHLDSQKMDMSNIVLMLIQKLLNENPFKCEDPCEGENKCSEPRASKAASMSNRSDKAEEQCQEHQELDCTSGMKQANGQFIDKLVESVMKLCLIMAKYSNDGAALAELEEQAASANKPNFRGTRCIHSGAMPQNYQDSLGHEVIVNNQCSTNSLQKQLQAVLQWIAASQFNVPMLYFMGDKDGQLEKLPQVSAKAAEKGYSVGGLLQEVMKFAKERQPDEAVGKVARKQLLDWLLANL.

Residues 1–188 constitute a propeptide that is removed on maturation; the sequence is MMAYSDTTMM…MTAAKNTNNN (188 aa). Phosphoserine occurs at positions 96, 130, 190, 213, 226, and 272. Residues 184–207 form a disordered region; the sequence is NTNNNQSPSAPPAKPPSTQRAVIS. A PKA-RI and PKA-RII subunit binding domain region spans residues 219-232; sequence FYVNRLSSLVIQMA. Residues 287–323 are disordered; the sequence is RGTGEESREGGQKSFLYSELSNKSKSGDKQMSQRESK. Residues 288 to 297 are compositionally biased toward basic and acidic residues; it reads GTGEESREGG. S300 is subject to Phosphoserine. Y303 is subject to Phosphotyrosine. Phosphoserine occurs at positions 304 and 307. Over residues 311–323 the composition is skewed to basic and acidic residues; sequence KSGDKQMSQRESK. The interval 336–345 is PKA-RI-alpha subunit binding domain; the sequence is YANQVASDMM. Residues S342, S432, S443, S445, S447, S450, S464, and S492 each carry the phosphoserine modification. The residue at position 506 (T506) is a Phosphothreonine. S536, S581, S627, and S703 each carry phosphoserine.

It belongs to the AKAP110 family. As to quaternary structure, interacts with PRKAR1A and PRKAR2A. Interacts with ENO4. Interacts with QRICH2. Post-translationally, phosphorylated by STK33 during sperm flagella assembly. In terms of tissue distribution, testis specific; only expressed in round spermatids.

The protein localises to the cell projection. It is found in the cilium. The protein resides in the flagellum. Functionally, major structural component of sperm fibrous sheath. Plays a role in sperm motility. This chain is A-kinase anchor protein 4, found in Homo sapiens (Human).